The primary structure comprises 137 residues: Large ribosomal subunit protein uL16 (137 aa).

It belongs to the universal ribosomal protein uL16 family. In terms of assembly, part of the 50S ribosomal subunit.

Its function is as follows. Binds 23S rRNA and is also seen to make contacts with the A and possibly P site tRNAs. This chain is Large ribosomal subunit protein uL16, found in Halorhodospira halophila (strain DSM 244 / SL1) (Ectothiorhodospira halophila (strain DSM 244 / SL1)).